Consider the following 362-residue polypeptide: Glutamate 5-kinase (362 aa).

K3 provides a ligand contact to ATP. Substrate is bound by residues S43, D128, and N140. ATP-binding positions include 160 to 161 and 202 to 208; these read TD and TGGMRTK. A PUA domain is found at 267 to 348; sequence PGTILIDAGA…REIEPILGYS (82 aa).

It belongs to the glutamate 5-kinase family.

It localises to the cytoplasm. The catalysed reaction is L-glutamate + ATP = L-glutamyl 5-phosphate + ADP. It participates in amino-acid biosynthesis; L-proline biosynthesis; L-glutamate 5-semialdehyde from L-glutamate: step 1/2. Its function is as follows. Catalyzes the transfer of a phosphate group to glutamate to form L-glutamate 5-phosphate. The sequence is that of Glutamate 5-kinase from Xanthomonas campestris pv. campestris (strain 8004).